A 246-amino-acid polypeptide reads, in one-letter code: Probable transcriptional regulatory protein Ent638_2432 (246 aa).

Belongs to the TACO1 family.

The protein resides in the cytoplasm. This is Probable transcriptional regulatory protein Ent638_2432 from Enterobacter sp. (strain 638).